A 396-amino-acid chain; its full sequence is S-adenosylmethionine synthase (396 aa).

His14 serves as a coordination point for ATP. Asp16 serves as a coordination point for Mg(2+). Residue Glu42 coordinates K(+). Residues Glu55 and Gln98 each coordinate L-methionine. The segment at 98–108 is flexible loop; the sequence is QSPDIALGVNK. Residues 174–176, 241–242, Asp250, 256–257, Ala273, and Lys277 each bind ATP; these read DGK, RF, and RK. L-methionine is bound at residue Asp250. An L-methionine-binding site is contributed by Lys281.

Belongs to the AdoMet synthase family. In terms of assembly, homotetramer; dimer of dimers. Mg(2+) serves as cofactor. K(+) is required as a cofactor.

The protein resides in the cytoplasm. The catalysed reaction is L-methionine + ATP + H2O = S-adenosyl-L-methionine + phosphate + diphosphate. Its pathway is amino-acid biosynthesis; S-adenosyl-L-methionine biosynthesis; S-adenosyl-L-methionine from L-methionine: step 1/1. Functionally, catalyzes the formation of S-adenosylmethionine (AdoMet) from methionine and ATP. The overall synthetic reaction is composed of two sequential steps, AdoMet formation and the subsequent tripolyphosphate hydrolysis which occurs prior to release of AdoMet from the enzyme. This is S-adenosylmethionine synthase from Pseudothermotoga lettingae (strain ATCC BAA-301 / DSM 14385 / NBRC 107922 / TMO) (Thermotoga lettingae).